The primary structure comprises 267 residues: tRNA pseudouridine synthase A (267 aa).

D53 functions as the Nucleophile in the catalytic mechanism. Y114 serves as a coordination point for substrate.

This sequence belongs to the tRNA pseudouridine synthase TruA family. Homodimer.

It carries out the reaction uridine(38/39/40) in tRNA = pseudouridine(38/39/40) in tRNA. In terms of biological role, formation of pseudouridine at positions 38, 39 and 40 in the anticodon stem and loop of transfer RNAs. This chain is tRNA pseudouridine synthase A, found in Chlamydia trachomatis serovar L2b (strain UCH-1/proctitis).